The chain runs to 141 residues: ATP synthase epsilon chain (141 aa).

This sequence belongs to the ATPase epsilon chain family. F-type ATPases have 2 components, CF(1) - the catalytic core - and CF(0) - the membrane proton channel. CF(1) has five subunits: alpha(3), beta(3), gamma(1), delta(1), epsilon(1). CF(0) has three main subunits: a, b and c.

The protein localises to the cell inner membrane. Its function is as follows. Produces ATP from ADP in the presence of a proton gradient across the membrane. The chain is ATP synthase epsilon chain from Desulfatibacillum aliphaticivorans.